We begin with the raw amino-acid sequence, 82 residues long: Small ribosomal subunit protein bS16 (82 aa).

It belongs to the bacterial ribosomal protein bS16 family.

The chain is Small ribosomal subunit protein bS16 from Cyanothece sp. (strain PCC 7425 / ATCC 29141).